Reading from the N-terminus, the 308-residue chain is Ribosomal protein L11 methyltransferase (308 aa).

Positions 160, 181, 203, and 245 each coordinate S-adenosyl-L-methionine.

It belongs to the methyltransferase superfamily. PrmA family.

It localises to the cytoplasm. It catalyses the reaction L-lysyl-[protein] + 3 S-adenosyl-L-methionine = N(6),N(6),N(6)-trimethyl-L-lysyl-[protein] + 3 S-adenosyl-L-homocysteine + 3 H(+). Its function is as follows. Methylates ribosomal protein L11. The polypeptide is Ribosomal protein L11 methyltransferase (Thermoanaerobacter pseudethanolicus (strain ATCC 33223 / 39E) (Clostridium thermohydrosulfuricum)).